Consider the following 109-residue polypeptide: uncharacterized protein (109 aa).

This is an uncharacterized protein from Caenorhabditis elegans.